The following is a 491-amino-acid chain: Ketol-acid reductoisomerase (NADP(+)) (491 aa).

A KARI N-terminal Rossmann domain is found at 15 to 208 (AQLGTCRFME…GGHRAGVLES (194 aa)). NADP(+) contacts are provided by residues 45–48 (CGAQ), Arg68, Arg76, Ser78, and 108–110 (DKQ). Residue His132 is part of the active site. Gly158 serves as a coordination point for NADP(+). 2 consecutive KARI C-terminal knotted domains span residues 209–353 (SFVA…KEQE) and 354–486 (YFDK…MTAM). 4 residues coordinate Mg(2+): Asp217, Glu221, Glu389, and Glu393. Position 414 (Ser414) interacts with substrate.

This sequence belongs to the ketol-acid reductoisomerase family. It depends on Mg(2+) as a cofactor.

It catalyses the reaction (2R)-2,3-dihydroxy-3-methylbutanoate + NADP(+) = (2S)-2-acetolactate + NADPH + H(+). It carries out the reaction (2R,3R)-2,3-dihydroxy-3-methylpentanoate + NADP(+) = (S)-2-ethyl-2-hydroxy-3-oxobutanoate + NADPH + H(+). The protein operates within amino-acid biosynthesis; L-isoleucine biosynthesis; L-isoleucine from 2-oxobutanoate: step 2/4. It functions in the pathway amino-acid biosynthesis; L-valine biosynthesis; L-valine from pyruvate: step 2/4. Its function is as follows. Involved in the biosynthesis of branched-chain amino acids (BCAA). Catalyzes an alkyl-migration followed by a ketol-acid reduction of (S)-2-acetolactate (S2AL) to yield (R)-2,3-dihydroxy-isovalerate. In the isomerase reaction, S2AL is rearranged via a Mg-dependent methyl migration to produce 3-hydroxy-3-methyl-2-ketobutyrate (HMKB). In the reductase reaction, this 2-ketoacid undergoes a metal-dependent reduction by NADPH to yield (R)-2,3-dihydroxy-isovalerate. The protein is Ketol-acid reductoisomerase (NADP(+)) of Christiangramia forsetii (strain DSM 17595 / CGMCC 1.15422 / KT0803) (Gramella forsetii).